The primary structure comprises 902 residues: MWIPSKLTRPGRLHNAIVRPRVLDLLQHATCYKLVLFRSPAGYGKTTMAAQWLADKPNLGWYSIDDSDNDPFRFMNYLLQAINKATHNACPNAQKLAEKRQFSSLHSLFSEVFAEMADYHGECYVVLDDYHLIHDETIHEAMRFFLKHMPDNLTLVVTSRSTPPLGTANLRVRDLMIEIGNELLAFDTEETTRFFNQRVSDGIDALTANHLRDYVEGWPSAMQLIALQAQHQHRTLAQTIESVSHFNHAHLWDYLVEEVFDLLDDETRYFLMQCSVLDHFDDALVSSLTGRDDALAMIESLNRFGLFISPLEGETNWYRFHNLFAEFLAHQRQARIPQQEQDLQRAAAKAWLEAAAPHQALRHAHLAQDTELLASILSQYGWKMFNQGELEVLEAAINQLSPPQLYREPKLCMLQAWLAQSQHRYNDVGALLAKAAKEMKALNVELSTKEQGEFNALRAQVAINQNEPEKALELAELALSQLDHTTYRSRIVATSVVGEVNHVLGHLSRALSMMQQTEKLARQYQVYHQALWALLQQSEILLAQGYVQAAYEVQDNAFKLIEEQQLHQVPLHEFLLRIRAQILWCWNRLDEAEQAAYKGLSVLENHSQSKHLHCYSMLARIAIGRGELDKAGRFIEQIQHLLKQSTYHVDWTANASLSLLLYWQVKENSTEIRQWLQSSTRPDKACNHFSQLQWRNIARAQIQLGELSEARHTLDFIQEQAQEYQLVTDTNRNLIVEALLAITEGDDLQACHKLKQALRLTNQTGMIGNFLIDGSKIGHLLEKLVHKGELGDLERHRAHLLLKEISTTQRSRSIHFDEEFVEKLVNHPNIPELVRTSPLTQREWQVLGLIYSGFSNEQIAHELDVAGTTIKTHIRNLYQKLNIANRKEAVQTAEQLLQLMGY.

An ATP-binding site is contributed by Ser39–Thr46. Residues Glu832–Leu897 enclose the HTH luxR-type domain. Residues Asn856–Arg875 constitute a DNA-binding region (H-T-H motif).

It belongs to the MalT family. In terms of assembly, monomer in solution. Oligomerizes to an active state in the presence of the positive effectors ATP and maltotriose.

With respect to regulation, activated by ATP and maltotriose, which are both required for DNA binding. Its function is as follows. Positively regulates the transcription of the maltose regulon whose gene products are responsible for uptake and catabolism of malto-oligosaccharides. Specifically binds to the promoter region of its target genes, recognizing a short DNA motif called the MalT box. In Vibrio cholerae serotype O1 (strain ATCC 39315 / El Tor Inaba N16961), this protein is HTH-type transcriptional regulator MalT.